The primary structure comprises 460 residues: Nuclear transport factor 2 (460 aa).

Residues 15–131 enclose the NTF2 domain; it reads VGRAFVEQYY…YFVLNDVFRF (117 aa). 3 disordered regions span residues 207–226, 238–289, and 361–460; these read EPPT…GDAP, KSSP…VDVE, and RQAV…GGSS. The 78-residue stretch at 293–370 folds into the RRM domain; that stretch reads HSIYVRNLPF…RQAVVEEKKT (78 aa). The span at 373–382 shows a compositional bias: gly residues; sequence RGGGNNGGSR. Residues 383–394 show a composition bias toward low complexity; it reads GRYFSGRGSFRN. Gly residues-rich tracts occupy residues 399–416 and 450–460; these read GGRG…GGEF and GRGGARGGGSS.

As to quaternary structure, interacts with MBD6.

It is found in the cytoplasm. The protein resides in the nucleus. Involved in RNA-directed DNA methylation (RdDM). This chain is Nuclear transport factor 2, found in Arabidopsis thaliana (Mouse-ear cress).